The following is a 474-amino-acid chain: Ribosomal RNA small subunit methyltransferase F (474 aa).

Residues 121–127 (ASAPGSK), glutamate 145, aspartate 172, and aspartate 190 contribute to the S-adenosyl-L-methionine site. Residue cysteine 243 is the Nucleophile of the active site.

The protein belongs to the class I-like SAM-binding methyltransferase superfamily. RsmB/NOP family.

Its subcellular location is the cytoplasm. The enzyme catalyses cytidine(1407) in 16S rRNA + S-adenosyl-L-methionine = 5-methylcytidine(1407) in 16S rRNA + S-adenosyl-L-homocysteine + H(+). Specifically methylates the cytosine at position 1407 (m5C1407) of 16S rRNA. The protein is Ribosomal RNA small subunit methyltransferase F of Shewanella piezotolerans (strain WP3 / JCM 13877).